The chain runs to 32 residues: Photosystem II reaction center protein Z (32 aa).

A helical transmembrane segment spans residues 9–31; the sequence is FILIGSASWAALVLLVGSLNSFV.

Belongs to the PsbZ family. PSII is composed of 1 copy each of membrane proteins PsbA, PsbB, PsbC, PsbD, PsbE, PsbF, PsbH, PsbI, PsbJ, PsbK, PsbL, PsbM, PsbT, PsbY, PsbZ, Psb30/Ycf12, at least 3 peripheral proteins of the oxygen-evolving complex and a large number of cofactors. It forms dimeric complexes.

The protein resides in the plastid. It is found in the chloroplast thylakoid membrane. Its function is as follows. May control the interaction of photosystem II (PSII) cores with the light-harvesting antenna, regulates electron flow through the 2 photosystem reaction centers. PSII is a light-driven water plastoquinone oxidoreductase, using light energy to abstract electrons from H(2)O, generating a proton gradient subsequently used for ATP formation. The sequence is that of Photosystem II reaction center protein Z from Euglena viridis (Cercaria viridis).